A 677-amino-acid polypeptide reads, in one-letter code: UPF0313 protein RPA0679 (677 aa).

The Radical SAM core domain occupies 335 to 601; the sequence is AWDMIKTSVT…VEAIKGLRQR (267 aa). The [4Fe-4S] cluster site is built by Cys349, Cys353, and Cys356. The segment at 635-677 is disordered; sequence RPDQLVPAHQPPGTGKAAGTRRPVRGDGPKPQRFTTKGVRLVK.

This sequence belongs to the UPF0313 family. The cofactor is [4Fe-4S] cluster.

This chain is UPF0313 protein RPA0679, found in Rhodopseudomonas palustris (strain ATCC BAA-98 / CGA009).